Consider the following 408-residue polypeptide: MYSPDTTKYLIHLILQIEGVVDKPDVVGAIFGQTEGLLGEDLDLRDLQRTGRVGRIDVQITTKRGETKGVILISSSLDRAETALLASSLETIDRVGPCTAHVRVDRIEDIRVTKRRKIVERAKELLLEDFDEGSINSDDLLDEVREAIRIEKLEYLGEEKVHAGPNVIDSDAIIIVEGRADVINLLRYGIKNAVAVEGTNVPRIIIDLCSQKTATTLLDGDRGGELILRELLQVAEIDFVAYSPRGKSVEEMSRKEIVKALRNKVPAVGIIDQPPAEENVERLPPSAAPAEVRAPAGAGRTSEGERPPRREWDSKPPSTLGEHMADVRDKKIARFLSPDYTVLLESNATDVEGALQNLNGDVEGLVVDRIIDQKLLDQLGGRDIEFVAARDFKGIIKRPLSIRLIKIG.

Residues 171 to 250 enclose the Toprim domain; sequence DAIIIVEGRA…AYSPRGKSVE (80 aa). 3 residues coordinate Mg(2+): E177, D219, and D221. The interval 276–323 is disordered; it reads AEENVERLPPSAAPAEVRAPAGAGRTSEGERPPRREWDSKPPSTLGEH. Low complexity predominate over residues 284–298; it reads PPSAAPAEVRAPAGA. A compositionally biased stretch (basic and acidic residues) spans 302 to 314; it reads SEGERPPRREWDS.

The protein belongs to the archaeal DnaG primase family. In terms of assembly, forms a ternary complex with MCM helicase and DNA. It depends on Mg(2+) as a cofactor.

It carries out the reaction ssDNA + n NTP = ssDNA/pppN(pN)n-1 hybrid + (n-1) diphosphate.. Functionally, RNA polymerase that catalyzes the synthesis of short RNA molecules used as primers for DNA polymerase during DNA replication. The sequence is that of DNA primase DnaG from Methanoculleus marisnigri (strain ATCC 35101 / DSM 1498 / JR1).